A 130-amino-acid polypeptide reads, in one-letter code: MIGNYNYGTGRRKSAVARVFIKSGSGQIVVNGKPANEYFSRETGLMVIRQPLELTNNVETFDIMVNVNGGGESGQAGAVRHGITRALIDYDATLKPELSKAGFVTRDAREVERKKVGLRKARRAKQFSKR.

The protein belongs to the universal ribosomal protein uS9 family.

The sequence is that of Small ribosomal subunit protein uS9 from Herminiimonas arsenicoxydans.